Here is a 530-residue protein sequence, read N- to C-terminus: Metal transporter Nramp2 (530 aa).

The disordered stretch occupies residues 1–35; that stretch reads MENDVKENLEEEEDRLLPPPPPSQSLPSTDSESEA. Helical transmembrane passes span 68–88, 96–116, 153–173, 177–197, 205–225, 251–271, 297–317, 339–359, 395–415, 418–438, 456–476, and 484–504; these read LWLFTGPGFLMSIAFLDPGNL, AIAGYSLLWLLMWATAMGLLI, LALIGADIQEVIGSAIAIQIL, FLPLWAGVVITASDCFLFLFL, LEAVFAVLIATMGLSFAWMFG, AVGVVGCVIMPHNVFLHSALV, VALFISFMINLFVTTVFAKGF, FGGGLLPILYIWGIGLLAAGQ, IVPTMIVAIVFNTSEASLDVL, WLNVLQSVQIPFALLPLLTLV, IAWTVAALVMIINGYLLLDFF, and LFGVTVCVWTTAYIAFIVYLI.

It belongs to the NRAMP (TC 2.A.55) family.

Its subcellular location is the membrane. Its function is as follows. Seems to be involved in iron uptake. The protein is Metal transporter Nramp2 (NRAMP2) of Arabidopsis thaliana (Mouse-ear cress).